A 312-amino-acid chain; its full sequence is Olfactory receptor OR51C1 (312 aa).

Over 1-26 (MGSNITSTSIIFLLTGVPGLEAFHTW) the chain is Extracellular. The chain crosses the membrane as a helical span at residues 27–47 (ISIPFCFLSVTALLGNSLILF). Residues 48–66 (ATITQPSLHEPMYYFLSML) lie on the Cytoplasmic side of the membrane. Residues 67-87 (SATDLGLSISTLVTMLSIFWF) form a helical membrane-spanning segment. The Extracellular segment spans residues 88–99 (NVREISFNACLS). A disulfide bond links Cys97 and Cys179. Residues 100 to 120 (HMFFIKFFTVMESSVLLAMAF) traverse the membrane as a helical segment. Residues 121–143 (DRFVAVSNPLRYAMILTDSRIAQ) are Cytoplasmic-facing. A helical membrane pass occupies residues 144–164 (IGVASVIRGLLMLTPMVALLI). At 165 to 201 (RLSYCHSQVLHHSYCYHPDVMKLSCTDTRINSAVGLT) the chain is on the extracellular side. The chain crosses the membrane as a helical span at residues 202–222 (AMFSTVGVDLLLILLSYVLII). The Cytoplasmic portion of the chain corresponds to 223-240 (RTVLSVASPEERKETFST). Residues 241–261 (CVSHIVAFAIYYIPLISLSIV) form a helical membrane-spanning segment. The Extracellular segment spans residues 262–273 (HRFGKQAPAYVH). Residues 274–294 (TMIANTYLLISPLMNPVIYSV) traverse the membrane as a helical segment. Over 295–312 (KTKQIRRAVIKILHSKET) the chain is Cytoplasmic.

Belongs to the G-protein coupled receptor 1 family.

It localises to the membrane. Odorant receptor. This chain is Olfactory receptor OR51C1, found in Homo sapiens (Human).